A 187-amino-acid chain; its full sequence is MSNAEDHAGTRRDFLYYATAGAGAVATGAAVWPLINQMNPSADVQALASIFVDVSSVEPGVQLTVKFLGKPIFIRRRTEADIELGRSVQLGQLVDTNARNANIDAGAEATDQNRTLDEAGEWLVMWGVCTHLGCVPIGGVSGDFGGWFCPCHGSHYDSAGRIRKGPAPENLPIPLAKFIDETTIQLG.

The helical transmembrane segment at 15-35 threads the bilayer; it reads LYYATAGAGAVATGAAVWPLI. Residues 89–185 enclose the Rieske domain; the sequence is QLGQLVDTNA…AKFIDETTIQ (97 aa). Residues cysteine 129, histidine 131, cysteine 149, and histidine 152 each coordinate [2Fe-2S] cluster. Cysteine 134 and cysteine 151 are oxidised to a cystine.

The protein belongs to the Rieske iron-sulfur protein family. The main subunits of complex b-c1 are: cytochrome b, cytochrome c1 and the Rieske protein. [2Fe-2S] cluster is required as a cofactor.

Its subcellular location is the cell membrane. The catalysed reaction is a quinol + 2 Fe(III)-[cytochrome c](out) = a quinone + 2 Fe(II)-[cytochrome c](out) + 2 H(+)(out). Component of the ubiquinol-cytochrome c reductase complex (complex III or cytochrome b-c1 complex), which is a respiratory chain that generates an electrochemical potential coupled to ATP synthesis. This Cereibacter sphaeroides (Rhodobacter sphaeroides) protein is Ubiquinol-cytochrome c reductase iron-sulfur subunit (petA).